A 150-amino-acid chain; its full sequence is Transcriptional repressor NrdR (150 aa).

The segment at 3-34 is a zinc-finger region; the sequence is CPFCNFEESKVVDSRATDDNTTIRRRRECLNC. Residues 49-139 enclose the ATP-cone domain; it reads VLVVKKDLTR…VYRQFKDINT (91 aa).

This sequence belongs to the NrdR family. It depends on Zn(2+) as a cofactor.

Its function is as follows. Negatively regulates transcription of bacterial ribonucleotide reductase nrd genes and operons by binding to NrdR-boxes. The chain is Transcriptional repressor NrdR from Clostridium botulinum (strain Alaska E43 / Type E3).